Here is a 340-residue protein sequence, read N- to C-terminus: DNA-directed RNA polymerase subunit alpha (340 aa).

Positions 1–236 (MLSLSKNWNT…EQLQLFISFE (236 aa)) are alpha N-terminal domain (alpha-NTD). The alpha C-terminal domain (alpha-CTD) stretch occupies residues 251–340 (FSPYLLKRVD…LSKRYEDSYN (90 aa)).

The protein belongs to the RNA polymerase alpha chain family. Homodimer. The RNAP catalytic core consists of 2 alpha, 1 beta, 1 beta' and 1 omega subunit. When a sigma factor is associated with the core the holoenzyme is formed, which can initiate transcription.

The enzyme catalyses RNA(n) + a ribonucleoside 5'-triphosphate = RNA(n+1) + diphosphate. Its function is as follows. DNA-dependent RNA polymerase catalyzes the transcription of DNA into RNA using the four ribonucleoside triphosphates as substrates. This is DNA-directed RNA polymerase subunit alpha from Rickettsia rickettsii (strain Iowa).